The primary structure comprises 417 residues: Tyrosine--tRNA ligase (417 aa).

L-tyrosine is bound at residue Y39. The 'HIGH' region motif lies at P44 to G53. The L-tyrosine site is built by Y176 and Q180. The short motif at K236–S240 is the 'KMSKS' region element. K239 contacts ATP. Residues I350–A417 form the S4 RNA-binding domain.

This sequence belongs to the class-I aminoacyl-tRNA synthetase family. TyrS type 1 subfamily. Homodimer.

The protein localises to the cytoplasm. It catalyses the reaction tRNA(Tyr) + L-tyrosine + ATP = L-tyrosyl-tRNA(Tyr) + AMP + diphosphate + H(+). Its function is as follows. Catalyzes the attachment of tyrosine to tRNA(Tyr) in a two-step reaction: tyrosine is first activated by ATP to form Tyr-AMP and then transferred to the acceptor end of tRNA(Tyr). The polypeptide is Tyrosine--tRNA ligase (Brucella abortus (strain 2308)).